A 301-amino-acid chain; its full sequence is Probable alpha-L-glutamate ligase (301 aa).

Residues 104 to 287 (LQILARKGIG…VAGKIIEYLE (184 aa)) form the ATP-grasp domain. ATP contacts are provided by residues Lys141, 178-179 (EY), Asp187, and 211-213 (RSN). Asp248, Glu260, and Asn262 together coordinate Mg(2+). Mn(2+) is bound by residues Asp248, Glu260, and Asn262.

This sequence belongs to the RimK family. The cofactor is Mg(2+). Mn(2+) serves as cofactor.

This chain is Probable alpha-L-glutamate ligase, found in Picosynechococcus sp. (strain ATCC 27264 / PCC 7002 / PR-6) (Agmenellum quadruplicatum).